Here is a 633-residue protein sequence, read N- to C-terminus: Probable potassium transport system protein Kup (633 aa).

12 helical membrane-spanning segments follow: residues 19–39 (LGML…SPLY), 61–81 (ILAL…VLFI), 112–132 (VLVI…MITP), 148–168 (SGLE…LFLI), 179–199 (LFGP…INGI), 217–237 (FFIV…LALT), 258–278 (WFAL…ALLL), 290–310 (LLAP…ATVI), 348–368 (IYIG…VLGF), 380–400 (VAVT…MLLL), 405–425 (PVLA…FFAA), and 430–450 (IFQG…LMTT).

It belongs to the HAK/KUP transporter (TC 2.A.72) family.

It is found in the cell inner membrane. It catalyses the reaction K(+)(in) + H(+)(in) = K(+)(out) + H(+)(out). Its function is as follows. Transport of potassium into the cell. Likely operates as a K(+):H(+) symporter. The sequence is that of Probable potassium transport system protein Kup from Pseudomonas fluorescens (strain ATCC BAA-477 / NRRL B-23932 / Pf-5).